Reading from the N-terminus, the 208-residue chain is 3-isopropylmalate dehydratase small subunit 2 (208 aa).

The protein belongs to the LeuD family. LeuD type 1 subfamily. As to quaternary structure, heterodimer of LeuC and LeuD.

The enzyme catalyses (2R,3S)-3-isopropylmalate = (2S)-2-isopropylmalate. Its pathway is amino-acid biosynthesis; L-leucine biosynthesis; L-leucine from 3-methyl-2-oxobutanoate: step 2/4. Functionally, catalyzes the isomerization between 2-isopropylmalate and 3-isopropylmalate, via the formation of 2-isopropylmaleate. This chain is 3-isopropylmalate dehydratase small subunit 2, found in Salmonella choleraesuis (strain SC-B67).